A 210-amino-acid polypeptide reads, in one-letter code: Small ribosomal subunit protein uS3 (210 aa).

Positions 17-86 (IDEFLEKELR…NPQIDVQEIK (70 aa)) constitute a KH type-2 domain.

This sequence belongs to the universal ribosomal protein uS3 family. As to quaternary structure, part of the 30S ribosomal subunit.

Functionally, binds the lower part of the 30S subunit head. This Pyrococcus horikoshii (strain ATCC 700860 / DSM 12428 / JCM 9974 / NBRC 100139 / OT-3) protein is Small ribosomal subunit protein uS3.